An 89-amino-acid chain; its full sequence is Defensin-like protein 103 (89 aa).

Positions 1 to 24 are cleaved as a signal peptide; it reads MAITRKNLVAFCFTILFIISSIHC. 4 disulfides stabilise this stretch: Cys-46–Cys-84, Cys-52–Cys-75, Cys-61–Cys-82, and Cys-65–Cys-83.

Belongs to the DEFL family.

Its subcellular location is the secreted. In Arabidopsis thaliana (Mouse-ear cress), this protein is Defensin-like protein 103.